Reading from the N-terminus, the 186-residue chain is Ribosome-recycling factor (186 aa).

Belongs to the RRF family.

Its subcellular location is the cytoplasm. In terms of biological role, responsible for the release of ribosomes from messenger RNA at the termination of protein biosynthesis. May increase the efficiency of translation by recycling ribosomes from one round of translation to another. In Amoebophilus asiaticus (strain 5a2), this protein is Ribosome-recycling factor.